Reading from the N-terminus, the 418-residue chain is Tol-Pal system protein TolB (418 aa).

The first 21 residues, 1-21, serve as a signal peptide directing secretion; that stretch reads MKLFVQLVLFISLFIPYSTKA.

This sequence belongs to the TolB family. In terms of assembly, the Tol-Pal system is composed of five core proteins: the inner membrane proteins TolA, TolQ and TolR, the periplasmic protein TolB and the outer membrane protein Pal. They form a network linking the inner and outer membranes and the peptidoglycan layer.

The protein localises to the periplasm. In terms of biological role, part of the Tol-Pal system, which plays a role in outer membrane invagination during cell division and is important for maintaining outer membrane integrity. This is Tol-Pal system protein TolB from Wolbachia pipientis subsp. Culex pipiens (strain wPip).